A 549-amino-acid chain; its full sequence is Cation/acetate symporter ActP (549 aa).

13 consecutive transmembrane segments (helical) span residues 33 to 53 (WQAI…TYWA), 76 to 96 (GLAI…SALV), 103 to 123 (GLIY…LIAE), 149 to 169 (LSAC…MVGA), 183 to 203 (IAVV…GMLA), 206 to 226 (WVQI…AFMV), 262 to 282 (ISAL…PHIL), 303 to 323 (GFMG…IMLV), 355 to 375 (LFLG…VAGL), 404 to 424 (VSKI…ILFE), 428 to 448 (IAFM…PIIL), 463 to 483 (IGGW…PTIW), and 493 to 513 (IFPY…GIWF).

Belongs to the sodium:solute symporter (SSF) (TC 2.A.21) family.

It is found in the cell inner membrane. Transports acetate. The chain is Cation/acetate symporter ActP from Enterobacter sp. (strain 638).